The sequence spans 730 residues: MSDRFELYLTCPKGLEGLLAEEAKGLGLEEVREHTSAIRGAADMETAYRLCVWSRLANRVLLVLKRFSMKNADDLYDGVNAVDWADHLAADGTLAVEFSGHGSGIDNTHFGALKVKDAIVDKLRNREGLRPSVEKIDPDVRVHLRLDRGEAILSLDLSGHSLHQRGYRLQQGAAPLKENLAAAVLIRSGWPRIAAEGGALADPMCGVGTFLVEAAMIAADIAPNLKRERWGFSAWLGHVPALWRKVHDEAQARAQAGLAKPPLWIRGYEADPRLIQPGRNNVERAGLGDWVKIYQGEVSTFEPRPDQNQKGLVISNPPYGERLGDEASLLYLYQNLGERLRQACMGWEAAVFTGAPQLGKRMGIRSHKQYAFWNGALPCKLLLFKVQPDQFVTGERREAQPEGTEVRQQAPQASEPARLSEGAQMFANRLQKNLKQLGKWARREQIDCYRLYDADMPEYALAVDLYQDWVHVQEYAAPRSIDPDKAQARLLDALAAIPQALGISPQRVVLKRRERQSGTRQYERQATEGRFQEVNEGGVKLLVNLTDYLDTGLFLDHRPMRMRIQREAAGKRFLNLFCYTATATVHAAKGGARSTTSVDLSKTYLDWARRNLALNGYSERNRLEQSDVMAWLEGNRDSYDLIFIDPPTFSNSKRMEGVFDVQRDHVQLLDLAMARLAPGGVLYFSNNFRKFQLDEHLMARYAVEEITAQTLDPDFARNNRIHRAWRLQLR.

The THUMP domain maps to 46–157 (TAYRLCVWSR…RGEAILSLDL (112 aa)). The segment at 395–418 (ERREAQPEGTEVRQQAPQASEPAR) is disordered.

The protein belongs to the methyltransferase superfamily. RlmKL family.

The protein localises to the cytoplasm. The catalysed reaction is guanosine(2445) in 23S rRNA + S-adenosyl-L-methionine = N(2)-methylguanosine(2445) in 23S rRNA + S-adenosyl-L-homocysteine + H(+). It carries out the reaction guanosine(2069) in 23S rRNA + S-adenosyl-L-methionine = N(2)-methylguanosine(2069) in 23S rRNA + S-adenosyl-L-homocysteine + H(+). In terms of biological role, specifically methylates the guanine in position 2445 (m2G2445) and the guanine in position 2069 (m7G2069) of 23S rRNA. The sequence is that of Ribosomal RNA large subunit methyltransferase K/L from Pseudomonas putida (strain GB-1).